We begin with the raw amino-acid sequence, 189 residues long: uncharacterized protein (189 aa).

Belongs to the OsmC/Ohr family.

This is an uncharacterized protein from Methanocaldococcus jannaschii (strain ATCC 43067 / DSM 2661 / JAL-1 / JCM 10045 / NBRC 100440) (Methanococcus jannaschii).